Consider the following 385-residue polypeptide: Protein hunchback (385 aa).

2 disordered regions span residues 1-94 (IGGI…YDAM) and 124-216 (ESRA…PGLR). The span at 63–77 (SASPSSSSKDSNGHS) shows a compositional bias: low complexity. Composition is skewed to basic and acidic residues over residues 126–135 (RASDARDHSP) and 173–203 (PERR…REGS). C2H2-type zinc fingers lie at residues 229–251 (FKCK…SKEH), 258–280 (LCCR…MRNH), 286–308 (FQCS…LKSH), and 314–338 (YRCA…KYQH). Residues 361-385 (TRRGPKQKPLSKIFEQQTGTNNHSP) form a disordered region. A compositionally biased stretch (polar residues) spans 374–385 (FEQQTGTNNHSP).

Belongs to the hunchback C2H2-type zinc-finger protein family.

Its subcellular location is the nucleus. In terms of biological role, gap class segmentation protein that controls development of head structures. The sequence is that of Protein hunchback (hb) from Bombyx mori (Silk moth).